A 394-amino-acid chain; its full sequence is Envelope glycoprotein D (394 aa).

The first 25 residues, 1 to 25 (MGGAAARLGAVILFVVIVGLHGVRG), serve as a signal peptide directing secretion. The tract at residues 25-57 (GKYALADASLKMADPNRFRGKDLPVPDRLTDPP) is interaction with TNFRSF14. Over 26–339 (KYALADASLK…PYHPPATPNN (314 aa)) the chain is Virion surface. His64 contacts Zn(2+). Intrachain disulfides connect Cys91/Cys214, Cys131/Cys227, and Cys143/Cys152. N-linked (GlcNAc...) asparagine; by host glycosylation is found at Asn119 and Asn146. Zn(2+) is bound at residue Asp240. The interval 261–305 (LKIAGWHGPKAPYTSTLLPPELSETPNATQPELAPEDPEDSALLE) is profusion. The interval 275–301 (STLLPPELSETPNATQPELAPEDPEDS) is disordered. N-linked (GlcNAc...) asparagine; by host glycosylation is present at Asn287. A helical transmembrane segment spans residues 340–364 (MGLIAGAVGGSLLAALVICGIVYWM). At 365-394 (RRRTQKGPKRIRLPHIREDDQPSSHQPLFY) the chain is on the intravirion side. Residues 374–394 (RIRLPHIREDDQPSSHQPLFY) are disordered.

It belongs to the herpesviridae glycoprotein D family. Homodimer. Interacts with host receptor TNFRSF14. Interacts with host receptor NECTIN1. Interacts (via profusion domain) with gB; this interaction occurs in the absence of gH/gL. Interacts (via profusion domain) with gH/gL heterodimer; this interaction occurs in the absence of gB. Associates with the gB-gH/gL-gD complex. Interacts (via C-terminus) with UL11 tegument protein. Interacts with host RSAD2.

Its subcellular location is the virion membrane. The protein localises to the host Golgi apparatus. Envelope glycoprotein that binds to the host cell entry receptors NECTIN1, TNFRSF14/HVEM and 3-O-sulfated heparan sulfate, promoting the virus entry into host cells. May trigger fusion with host membrane, by recruiting the fusion machinery composed of gB and gH/gL. The chain is Envelope glycoprotein D (gD) from Homo sapiens (Human).